The sequence spans 317 residues: MPMQGAQRKLLGSLNSTPTATSNLGLAANHTGAPCLEVSIPDGLFLSLGLVSLVENVLVVAAVAKNRNLHSSMYCFICCLALSDLLVSGSNMLETAVILLLETGALATRTSVVQQLHNTINVLTCSSMLCSLCFLGAIAVDRYISIFYALRYHSIMTLPRAQRAIAAIWVASVLSSTLFITYYDHAAVLLCLVVFFLAMLVLMAVLYVHMLARACQHAHGIIRLHKRQTPAHQGFGLRGAATLTILLGIFFLCWGPFFLHLTLVVFCPQHLTCSCIFKNFKVFLTLIICNTIIDPLIYAFRSQELRRTLKEVLLCSW.

The Extracellular segment spans residues 1–37 (MPMQGAQRKLLGSLNSTPTATSNLGLAANHTGAPCLE). An N-linked (GlcNAc...) asparagine glycan is attached at Asn-29. Residues 38 to 63 (VSIPDGLFLSLGLVSLVENVLVVAAV) form a helical membrane-spanning segment. Residues 64–72 (AKNRNLHSS) are Cytoplasmic-facing. A helical membrane pass occupies residues 73-93 (MYCFICCLALSDLLVSGSNML). Over 94–118 (ETAVILLLETGALATRTSVVQQLHN) the chain is Extracellular. Residues 119-140 (TINVLTCSSMLCSLCFLGAIAV) form a helical membrane-spanning segment. Residues 141 to 163 (DRYISIFYALRYHSIMTLPRAQR) are Cytoplasmic-facing. Residues 164–183 (AIAAIWVASVLSSTLFITYY) form a helical membrane-spanning segment. The Extracellular segment spans residues 184 to 191 (DHAAVLLC). The helical transmembrane segment at 192–211 (LVVFFLAMLVLMAVLYVHML) threads the bilayer. The Cytoplasmic portion of the chain corresponds to 212–240 (ARACQHAHGIIRLHKRQTPAHQGFGLRGA). Residues 241–266 (ATLTILLGIFFLCWGPFFLHLTLVVF) traverse the membrane as a helical segment. Residues 267–279 (CPQHLTCSCIFKN) are Extracellular-facing. Residues 280–300 (FKVFLTLIICNTIIDPLIYAF) traverse the membrane as a helical segment. Residues 301-317 (RSQELRRTLKEVLLCSW) lie on the Cytoplasmic side of the membrane. Cys-315 carries the S-palmitoyl cysteine lipid modification.

This sequence belongs to the G-protein coupled receptor 1 family. In terms of assembly, interacts with MGRN1, but does not undergo MGRN1-mediated ubiquitination; this interaction competes with GNAS-binding and thus inhibits agonist-induced cAMP production. Interacts with OPN3; the interaction results in a decrease in MC1R-mediated cAMP signaling and ultimately a decrease in melanin production in melanocytes.

It is found in the cell membrane. In terms of biological role, receptor for MSH (alpha, beta and gamma) and ACTH. The activity of this receptor is mediated by G proteins which activate adenylate cyclase. Mediates melanogenesis, the production of eumelanin (black/brown) and phaeomelanin (red/yellow), via regulation of cAMP signaling in melanocytes. The protein is Melanocyte-stimulating hormone receptor (MC1R) of Saguinus oedipus (Cotton-top tamarin).